Reading from the N-terminus, the 388-residue chain is 2-epi-5-epi-valiolone synthase (388 aa).

Residues 92-95 (ERNK), 124-128 (GIVAD), 148-149 (TT), K161, K170, and 188-191 (LLAT) contribute to the NAD(+) site. Zn(2+) contacts are provided by E203, H267, and H283.

It belongs to the sugar phosphate cyclases superfamily. EEVS-like family. Requires NAD(+) as cofactor. Co(2+) is required as a cofactor. The cofactor is Zn(2+).

It carries out the reaction D-sedoheptulose 7-phosphate = 2-epi-5-epi-valiolone + phosphate. Functionally, catalyzes the cyclization of D-sedoheptulose 7-phosphate to 2-epi-5-epi-valiolone. Probably involved in acarbose biosynthesis. This chain is 2-epi-5-epi-valiolone synthase, found in Streptomyces glaucescens.